The chain runs to 972 residues: Cycloisomaltooligosaccharide glucanotransferase (972 aa).

An N-terminal signal peptide occupies residues 1–38 (MVRFMYALRKRRLSLLLAMSLLVMCVASVVSPPPQALA). 2 CBM6 domains span residues 421–546 (TRYE…LTLG) and 748–871 (DIYE…LDLD).

This sequence belongs to the glycosyl hydrolase 66 family. As to quaternary structure, monomer.

It catalyses the reaction cyclizes part of a (1-&gt;6)-alpha-D-glucan chain by formation of a (1-&gt;6)-alpha-D-glucosidic bond.. Produces cycloisomaltooligosaccharide from dextran containing 7, 8 or 9 glucose units. The enzyme is specific for (1-&gt;6)-alpha-D-glucans (dextrans) and, without activity toward (1-&gt;4)-alpha-D-glucans, such as amylose. It also has no activity on oligosaccharides, such as amylopectin and pullulan, containing (1-&gt;6)-alpha-D-glucosidic linkages at branch points. The chain is Cycloisomaltooligosaccharide glucanotransferase from Niallia circulans (Bacillus circulans).